The sequence spans 416 residues: Serine hydroxymethyltransferase (416 aa).

Residues Leu121 and 125–127 (GHL) contribute to the (6S)-5,6,7,8-tetrahydrofolate site. The residue at position 230 (Lys230) is an N6-(pyridoxal phosphate)lysine. Residue 355 to 357 (SPF) coordinates (6S)-5,6,7,8-tetrahydrofolate.

Belongs to the SHMT family. Homodimer. The cofactor is pyridoxal 5'-phosphate.

It localises to the cytoplasm. The enzyme catalyses (6R)-5,10-methylene-5,6,7,8-tetrahydrofolate + glycine + H2O = (6S)-5,6,7,8-tetrahydrofolate + L-serine. It functions in the pathway one-carbon metabolism; tetrahydrofolate interconversion. Its pathway is amino-acid biosynthesis; glycine biosynthesis; glycine from L-serine: step 1/1. Its function is as follows. Catalyzes the reversible interconversion of serine and glycine with tetrahydrofolate (THF) serving as the one-carbon carrier. This reaction serves as the major source of one-carbon groups required for the biosynthesis of purines, thymidylate, methionine, and other important biomolecules. Also exhibits THF-independent aldolase activity toward beta-hydroxyamino acids, producing glycine and aldehydes, via a retro-aldol mechanism. This Streptococcus thermophilus (strain ATCC BAA-250 / LMG 18311) protein is Serine hydroxymethyltransferase.